A 671-amino-acid chain; its full sequence is cGMP-dependent protein kinase 1 (671 aa).

S2 bears the N-acetylserine mark. Residues 2–59 (SELEEDFAKILMLKEERIKELEKRLSEKEEEIQELKRKLHKCQSVLPVPSTHIGPRTT) adopt a coiled-coil conformation. The segment at 2 to 102 (SELEEDFAKI…LIKEAILDND (101 aa)) is required for dimerization. Residues 9–44 (AKILMLKEERIKELEKRLSEKEEEIQELKRKLHKCQ) form a leucine-zipper region. An autoinhibitory domain region spans residues 50–75 (PSTHIGPRTTRAQGISAEPQTYRSFH). Position 59 is a phosphothreonine; by autocatalysis (T59). Positions 103 to 220 (FMKNLELSQI…EYMEFLKSVP (118 aa)) are cGMP-binding, high affinity. 3',5'-cyclic GMP contacts are provided by residues 167–170 (GELA), 177–178 (RT), R282, 291–294 (GEKA), 301–302 (RT), and Y336. Residues 221 to 341 (TFQSLPDEIL…SNKAYEDAEA (121 aa)) are cGMP-binding, low affinity. The 260-residue stretch at 360-619 (FNIIDTLGVG…VKDIQKHKWF (260 aa)) folds into the Protein kinase domain. Residues 366 to 374 (LGVGGFGRV) and K390 contribute to the ATP site. Catalysis depends on D484, which acts as the Proton acceptor. Position 515 is a phosphothreonine (T515). The AGC-kinase C-terminal domain maps to 620–671 (EGFNWEGLRKGTLTPPIIPSVASPTDTSNFDSFPEDSDEPPPDDNSGWDIDF). The segment at 635 to 671 (PIIPSVASPTDTSNFDSFPEDSDEPPPDDNSGWDIDF) is disordered. Residues 652 to 661 (FPEDSDEPPP) are compositionally biased toward acidic residues.

This sequence belongs to the protein kinase superfamily. AGC Ser/Thr protein kinase family. cGMP subfamily. In terms of assembly, isoform alpha: parallel homodimer or heterodimer and also heterotetramer. Interacts directly with PPP1R12A. Non-covalent dimer of dimer of PRKG1-PRKG1 and PPP1R12A-PPP1R12A. This interaction targets PRKG1 to stress fibers to mediate smooth muscle cell relaxation and vasodilation in responses to rises in cGMP. Isoform beta: antiparallel homodimer. Part of cGMP kinase signaling complex at least composed of ACTA2/alpha-actin, CNN1/calponin H1, PLN/phospholamban, PRKG1 and ITPR1. Interacts with IRAG1. Forms a stable complex with ITPR1, IRAG1, and isoform beta of PRKG1. Interacts with TRPC7 (via ankyrin repeat domain). Isoform alpha interacts with RGS2. Interacts with GTF2I. In terms of processing, autophosphorylation increases kinase activity. 65 kDa monomer is produced by proteolytic cleavage. In terms of tissue distribution, detected in cerebellum, hippocampus, dorsomedial hypothalamus, medulla, subcommissural organ, cerebral cortex, amygdala, habenulae, various hypothalamic regions, olfactory bulb, pituitary gland, and retina. Isoform alpha is prominent in the cerebellum and medulla, whereas isoform Beta is predominant in the cortex, hippocampus, hypothalamus, and olfactory bulb.

Its subcellular location is the cytoplasm. The enzyme catalyses L-seryl-[protein] + ATP = O-phospho-L-seryl-[protein] + ADP + H(+). It carries out the reaction L-threonyl-[protein] + ATP = O-phospho-L-threonyl-[protein] + ADP + H(+). Its activity is regulated as follows. In the absence of cGMP, PRKG1 activity is suppressed by autoinhibitory contacts. Serine/threonine protein kinase that acts as a key mediator of the nitric oxide (NO)/cGMP signaling pathway. GMP binding activates PRKG1, which phosphorylates serines and threonines on many cellular proteins. Numerous protein targets for PRKG1 phosphorylation are implicated in modulating cellular calcium, but the contribution of each of these targets may vary substantially among cell types. Proteins that are phosphorylated by PRKG1 regulate platelet activation and adhesion, smooth muscle contraction, cardiac function, gene expression, feedback of the NO-signaling pathway, and other processes involved in several aspects of the CNS like axon guidance, hippocampal and cerebellar learning, circadian rhythm and nociception. Smooth muscle relaxation is mediated through lowering of intracellular free calcium, by desensitization of contractile proteins to calcium, and by decrease in the contractile state of smooth muscle or in platelet activation. Regulates intracellular calcium levels via several pathways: phosphorylates IRAG1 and inhibits IP3-induced Ca(2+) release from intracellular stores, phosphorylation of KCNMA1 (BKCa) channels decreases intracellular Ca(2+) levels, which leads to increased opening of this channel. PRKG1 phosphorylates the canonical transient receptor potential channel (TRPC) family which inactivates the associated inward calcium current. Another mode of action of NO/cGMP/PKGI signaling involves PKGI-mediated inactivation of the Ras homolog gene family member A (RhoA). Phosphorylation of RHOA by PRKG1 blocks the action of this protein in myriad processes: regulation of RHOA translocation; decreasing contraction; controlling vesicle trafficking, reduction of myosin light chain phosphorylation resulting in vasorelaxation. Activation of PRKG1 by NO signaling also alters gene expression in a number of tissues. In smooth muscle cells, increased cGMP and PRKG1 activity influence expression of smooth muscle-specific contractile proteins, levels of proteins in the NO/cGMP signaling pathway, down-regulation of the matrix proteins osteopontin and thrombospondin-1 to limit smooth muscle cell migration and phenotype. Regulates vasodilator-stimulated phosphoprotein (VASP) functions in platelets and smooth muscle. The chain is cGMP-dependent protein kinase 1 (Prkg1) from Mus musculus (Mouse).